Consider the following 505-residue polypeptide: Histidine ammonia-lyase (505 aa).

The segment at residues 141-143 (ASG) is a cross-link (5-imidazolinone (Ala-Gly)). Ser-142 bears the 2,3-didehydroalanine (Ser) mark.

This sequence belongs to the PAL/histidase family. Contains an active site 4-methylidene-imidazol-5-one (MIO), which is formed autocatalytically by cyclization and dehydration of residues Ala-Ser-Gly.

The protein localises to the cytoplasm. It carries out the reaction L-histidine = trans-urocanate + NH4(+). The protein operates within amino-acid degradation; L-histidine degradation into L-glutamate; N-formimidoyl-L-glutamate from L-histidine: step 1/3. The protein is Histidine ammonia-lyase of Bacillus cereus (strain AH187).